The primary structure comprises 1036 residues: Serine/threonine-protein kinase ULK2 (1036 aa).

The region spanning 9 to 271 (YSKRDLVGHG…FEAFFSHPFL (263 aa)) is the Protein kinase domain. ATP-binding positions include 15-23 (VGHGAFAVV) and Lys39. Asp131 functions as the Proton acceptor in the catalytic mechanism. Disordered stretches follow at residues 319 to 348 (ENLSSPPLGPPNYLQVSKDSASTSSKNSSC), 418 to 460 (TSTA…ADTA), 491 to 522 (CCCGHPQGHDSRSRNSSGSPVPQAQSPQSLLS), 540 to 588 (QKLR…SSDW), and 656 to 695 (AEQQSKAVFGRSVSTGKLSDQQGKTPICRHQGSTDSLNTE). The span at 335–348 (SKDSASTSSKNSSC) shows a compositional bias: low complexity. Polar residues predominate over residues 418–428 (TSTASSGTNVH). Ser430 carries the post-translational modification Phosphoserine. Positions 504-521 (RNSSGSPVPQAQSPQSLL) are enriched in polar residues. Polar residues predominate over residues 659-679 (QSKAVFGRSVSTGKLSDQQGK). Phosphoserine is present on residues Ser771 and Ser780. The tract at residues 812–1036 (ELPEETLMER…SALCHSTATV (225 aa)) is CTD-like region.

Belongs to the protein kinase superfamily. Ser/Thr protein kinase family. APG1/unc-51/ULK1 subfamily. As to quaternary structure, interacts with SYNGAP1. Component of a complex consisting of ATG13/KIAA0652, ULK1 and RB1CC1/FIP200. Interacts (via C-terminus) with ATG13/KIAA0652. Associates with the mammalian target of rapamycin complex 1 (mTORC1) through an interaction with RPTOR. Autophosphorylated. In response to nutrient limitation, probably phosphorylated and activated by AMPK, leading to activate autophagy.

The protein resides in the cytoplasmic vesicle membrane. The enzyme catalyses L-seryl-[protein] + ATP = O-phospho-L-seryl-[protein] + ADP + H(+). It carries out the reaction L-threonyl-[protein] + ATP = O-phospho-L-threonyl-[protein] + ADP + H(+). Its function is as follows. Serine/threonine-protein kinase involved in autophagy in response to starvation. Acts upstream of phosphatidylinositol 3-kinase PIK3C3 to regulate the formation of autophagophores, the precursors of autophagosomes. Part of regulatory feedback loops in autophagy: acts both as a downstream effector and a negative regulator of mammalian target of rapamycin complex 1 (mTORC1) via interaction with RPTOR. Activated via phosphorylation by AMPK, also acts as a negative regulator of AMPK through phosphorylation of the AMPK subunits PRKAA1, PRKAB2 and PRKAG1. May phosphorylate ATG13/KIAA0652, FRS2, FRS3 and RPTOR; however such data need additional evidences. Not involved in ammonia-induced autophagy or in autophagic response of cerebellar granule neurons (CGN) to low potassium concentration. Plays a role early in neuronal differentiation and is required for granule cell axon formation: may govern axon formation via Ras-like GTPase signaling and through regulation of the Rab5-mediated endocytic pathways within developing axons. The chain is Serine/threonine-protein kinase ULK2 (ULK2) from Homo sapiens (Human).